The sequence spans 388 residues: MALRSISFNQDYTCLAAGFDAAYKVYNCDPFGECFQKADDGGANLVEMLFSTSLIAVVGIGDKPANTMRKLKIINTKRKAVICELTFPTAILYVKMNRKRLVVVLVDQIFVYDVSCMKLLHSIEASAGLDDRIICDLCADDESVLVFQQSGSSDELAANAGTVVVFDALQIQPINVIECHRSPLQRIAVSKDGRLLATASVKGTIVRVFRVADGRKVHEFRRGSYTAQISCLSFNVDATVLCCSSNTGTVHFFRLDDVDRRRSTGSIDANIDGSETLPRESSITEEESSEINRLINSQLGGHNGFAKKKSAESLKNFIWSKSKTYLPSQINSILEPKRDYAFIKLTTEVESVVGLVDNNCYVATRAGDFFVYSVQPGQCVLLKHYKIE.

WD repeat units follow at residues 179–219 and 224–263; these read CHRS…KVHE and SYTA…RRRS. A L/FRRG motif motif is present at residues 220–224; it reads FRRGS.

Belongs to the WD repeat PROPPIN family.

Its subcellular location is the cytoplasm. The protein localises to the membrane. The protein resides in the vacuole membrane. Its function is as follows. Involved in peroxisome sequestration to the vacuole during macropexophagy. Also required for microautophagy. This is Autophagy-related protein 21 (ATG21) from Pichia angusta (Yeast).